The sequence spans 309 residues: Mitochondrial brown fat uncoupling protein 1 (309 aa).

Over 1–10 the chain is Mitochondrial intermembrane; it reads MLRAPGSDAP. A helical transmembrane segment spans residues 11 to 32; it reads PTLSVRIAAAAGAACLADMITF. Solcar repeat units lie at residues 11–104, 113–203, and 212–297; these read PTLS…VREW, ASLG…MKEA, and DDLP…LKRE. At 33–75 the chain is on the mitochondrial matrix side; it reads PLDTAKVRLQIQGEGQGQPPRAPRYRGVLGTVATLARTEGLQK. Residue arginine 58 coordinates fatty acid 16:0. A helical transmembrane segment spans residues 76 to 98; sequence LYSGLPAGLQRQVGFASLRIGLY. Over 99 to 118 the chain is Mitochondrial intermembrane; sequence DSVREWLSPGQGAAASLGSR. Residues 119–135 form a helical membrane-spanning segment; it reads ISAGVMTGGAAVFIGQP. At 136–180 the chain is on the mitochondrial matrix side; sequence TEVVKVRLQAQSHLHGRKPRYTGTYNAYRIIATTEGLTGLWKGTT. A helical membrane pass occupies residues 181–197; sequence PNLMRNVIINCTELVTY. Topologically, residues 198-214 are mitochondrial intermembrane; sequence DLMKEALVKNHLLADDL. Residues 215–234 form a helical membrane-spanning segment; it reads PCHFLSALVAGFCTTVLSSP. Topologically, residues 235–268 are mitochondrial matrix; sequence VDVVKTRFVNSVPEQYTSVPNCAMTMLTKEGPLA. A Cysteine sulfenic acid (-SOH) modification is found at cysteine 256. Residues 269-291 traverse the membrane as a helical segment; the sequence is FFKGFVPSFLRLGSWNVIMFVCF. Lysine 271 contacts fatty acid 16:0. The Mitochondrial intermembrane portion of the chain corresponds to 292–309; sequence EQLKRELMKSGRTVDCAT.

This sequence belongs to the mitochondrial carrier (TC 2.A.29) family. As to quaternary structure, most probably functions as a monomer. Binds one purine nucleotide per monomer. However, has also been suggested to function as a homodimer or a homotetramer. Tightly associates with cardiolipin in the mitochondrion inner membrane; may stabilize and regulate its activity. Post-translationally, may undergo sulfenylation upon cold exposure. May increase the sensitivity of UCP1 thermogenic function to the activation by noradrenaline probably through structural effects. In terms of processing, may undergo ubiquitin-mediated proteasomal degradation.

Its subcellular location is the mitochondrion inner membrane. The enzyme catalyses H(+)(in) = H(+)(out). With respect to regulation, has no constitutive proton transporter activity and has to be activated by long-chain fatty acids/LCFAs. Inhibited by purine nucleotides. Both purine nucleotides and LCFAs bind the cytosolic side of the transporter and directly compete to activate or inhibit it. Activated by noradrenaline and reactive oxygen species. Despite lacking canonical translational encoding for selenocysteine, a small pool of the protein has been observed to selectively incorporate selenocysteine at 'Cys-256'. Selenocysteine-modified protein is highly sensitive to redox modification and may constitute a pool of protein highly sensitive to activation by elevated levels of reactive oxygen species (ROS). In terms of biological role, mitochondrial protein responsible for thermogenic respiration, a specialized capacity of brown adipose tissue and beige fat that participates in non-shivering adaptive thermogenesis to temperature and diet variations and more generally to the regulation of energy balance. Functions as a long-chain fatty acid/LCFA and proton symporter, simultaneously transporting one LCFA and one proton through the inner mitochondrial membrane. However, LCFAs remaining associated with the transporter via their hydrophobic tails, it results in an apparent transport of protons activated by LCFAs. Thereby, dissipates the mitochondrial proton gradient and converts the energy of substrate oxydation into heat instead of ATP. Regulates the production of reactive oxygen species/ROS by mitochondria. The chain is Mitochondrial brown fat uncoupling protein 1 from Canis lupus familiaris (Dog).